A 173-amino-acid chain; its full sequence is Cytochrome c homolog (173 aa).

Residues 1-8 (MSGKELNK) lie on the Cytoplasmic side of the membrane. A helical; Signal-anchor membrane pass occupies residues 9 to 29 (IVAAILFASLIAMMVGFIANI). The Periplasmic segment spans residues 30 to 173 (LYKPVLEPKH…LFLKTYVHDK (144 aa)). Cysteine 82, cysteine 85, histidine 86, and methionine 148 together coordinate heme c.

Belongs to the cytochrome c family. Binds 1 heme c group covalently per subunit.

Its subcellular location is the cell membrane. Its function is as follows. May be involved in electron transfer from bc1 complex to aa3. This Rickettsia bellii (strain RML369-C) protein is Cytochrome c homolog (cycM).